Consider the following 344-residue polypeptide: N-acetyl-gamma-glutamyl-phosphate reductase (344 aa).

Cysteine 150 is a catalytic residue.

The protein belongs to the NAGSA dehydrogenase family. Type 1 subfamily.

The protein localises to the cytoplasm. It carries out the reaction N-acetyl-L-glutamate 5-semialdehyde + phosphate + NADP(+) = N-acetyl-L-glutamyl 5-phosphate + NADPH + H(+). Its pathway is amino-acid biosynthesis; L-arginine biosynthesis; N(2)-acetyl-L-ornithine from L-glutamate: step 3/4. In terms of biological role, catalyzes the NADPH-dependent reduction of N-acetyl-5-glutamyl phosphate to yield N-acetyl-L-glutamate 5-semialdehyde. The chain is N-acetyl-gamma-glutamyl-phosphate reductase from Pseudomonas paraeruginosa (strain DSM 24068 / PA7) (Pseudomonas aeruginosa (strain PA7)).